A 323-amino-acid polypeptide reads, in one-letter code: tRNA U34 carboxymethyltransferase (323 aa).

Residues Lys-91, Trp-105, Lys-110, Gly-130, 152–154, 181–182, Met-196, Tyr-200, and Arg-315 contribute to the carboxy-S-adenosyl-L-methionine site; these read DPT and IE.

This sequence belongs to the class I-like SAM-binding methyltransferase superfamily. CmoB family. Homotetramer.

The enzyme catalyses carboxy-S-adenosyl-L-methionine + 5-hydroxyuridine(34) in tRNA = 5-carboxymethoxyuridine(34) in tRNA + S-adenosyl-L-homocysteine + H(+). In terms of biological role, catalyzes carboxymethyl transfer from carboxy-S-adenosyl-L-methionine (Cx-SAM) to 5-hydroxyuridine (ho5U) to form 5-carboxymethoxyuridine (cmo5U) at position 34 in tRNAs. The polypeptide is tRNA U34 carboxymethyltransferase (Photorhabdus laumondii subsp. laumondii (strain DSM 15139 / CIP 105565 / TT01) (Photorhabdus luminescens subsp. laumondii)).